We begin with the raw amino-acid sequence, 68 residues long: Putative transcript Y 10 protein (68 aa).

The chain is Putative transcript Y 10 protein (TTTY10) from Homo sapiens (Human).